The primary structure comprises 646 residues: MAEKAGEAGVQTRSRRNRSTSREVSNGVAAPPAKATRSSQLEAVAEQATPSSQQSQKSVRTESSMSLGFNGGSSQGSRATSPTSFSRAQEKEELQNLNDRLAKILNKLNDSEEENRTLKIRLTTVQQETSADLNDQIGKYRDELERARKAVDAITQEKDRELLAKDKALGELNEHKAQFAALRKRLDELEARLKAAEKAARDKDNVLTELKAQLAESETAGKRIQKELADKTKQLDQARNQIEQEVISRTNLENALKTAEEKAKFENNLLESKLQRQSLSVTTVDHHSAQSTSRRSGSDFSASVEDMRSALEDAREEIQENMDRMYGSKLEGLEVLSESQKQTINGLNQALTASRHDMKDLQKENQQLRKKVGEVEKELHQQHQKFDQHKMDCTARIAALSDQSNQASQQYQALLEEYRTTTHNNVEMRTELEMYNKLLSDEEIRLGITSADQYGGVRHGAKKRKLTETFYTTPFGSRSSAGSRSAGHNSTPVTKSQVTRTTVKTSENKSKASGPVRILEVAPGKVVRLENISEAVMQLGHWRIHQHGASGDAAFQFEKDQVIGGQSIISVYSSTEDSQPNNGVTEIIATNAWLADSHLETVLSDGDGNQMATYEVSADSNLDIHNDSVRDSPRSAGKGILGFFGL.

The interval 1–85 (MAEKAGEAGV…GSRATSPTSF (85 aa)) is head. The disordered stretch occupies residues 1 to 94 (MAEKAGEAGV…FSRAQEKEEL (94 aa)). Composition is skewed to polar residues over residues 48 to 67 (ATPS…SMSL) and 75 to 87 (QGSR…SFSR). The segment at 86–126 (SRAQEKEELQNLNDRLAKILNKLNDSEEENRTLKIRLTTVQ) is coil 1A. An IF rod domain is found at 90-446 (EKEELQNLND…KLLSDEEIRL (357 aa)). The segment at 127–137 (QETSADLNDQI) is linker 1. The interval 138–281 (GKYRDELERA…SKLQRQSLSV (144 aa)) is coil 1B. Polar residues predominate over residues 281 to 301 (VTTVDHHSAQSTSRRSGSDFS). The segment at 281–304 (VTTVDHHSAQSTSRRSGSDFSASV) is disordered. A linker 2 region spans residues 282 to 299 (TTVDHHSAQSTSRRSGSD). A coil 2 region spans residues 300–439 (FSASVEDMRS…TELEMYNKLL (140 aa)). The tract at residues 440–646 (SDEEIRLGIT…GKGILGFFGL (207 aa)) is tail. The Nuclear localization signal signature appears at 457-471 (VRHGAKKRKLTETFY). Over residues 476-487 (GSRSSAGSRSAG) the composition is skewed to low complexity. Residues 476-513 (GSRSSAGSRSAGHNSTPVTKSQVTRTTVKTSENKSKAS) form a disordered region. Residues 488–505 (HNSTPVTKSQVTRTTVKT) are compositionally biased toward polar residues. The 115-residue stretch at 504 to 618 (KTSENKSKAS…NQMATYEVSA (115 aa)) folds into the LTD domain.

Belongs to the intermediate filament family.

It is found in the nucleus. Its function is as follows. Intermediate filament (IF) protein, component of the nuclear lamina, a fibrous layer on the nucleoplasmic side of the inner nuclear membrane, which is thought to provide a framework for the nuclear envelope. The chain is Lamin-1 from Hypsibius exemplaris (Freshwater tardigrade).